A 304-amino-acid chain; its full sequence is UDP-3-O-acyl-N-acetylglucosamine deacetylase (304 aa).

Zn(2+)-binding residues include His-78, His-237, and Asp-241. The active-site Proton donor is His-264.

The protein belongs to the LpxC family. Zn(2+) is required as a cofactor.

The enzyme catalyses a UDP-3-O-[(3R)-3-hydroxyacyl]-N-acetyl-alpha-D-glucosamine + H2O = a UDP-3-O-[(3R)-3-hydroxyacyl]-alpha-D-glucosamine + acetate. It participates in glycolipid biosynthesis; lipid IV(A) biosynthesis; lipid IV(A) from (3R)-3-hydroxytetradecanoyl-[acyl-carrier-protein] and UDP-N-acetyl-alpha-D-glucosamine: step 2/6. Its function is as follows. Catalyzes the hydrolysis of UDP-3-O-myristoyl-N-acetylglucosamine to form UDP-3-O-myristoylglucosamine and acetate, the committed step in lipid A biosynthesis. This chain is UDP-3-O-acyl-N-acetylglucosamine deacetylase, found in Thioalkalivibrio sulfidiphilus (strain HL-EbGR7).